A 379-amino-acid chain; its full sequence is Cytochrome b (379 aa).

Helical transmembrane passes span 33–53 (FGSL…FLAM), 77–98 (WLIR…YLHI), 113–133 (WNIG…GYVL), and 178–198 (FFAF…VHLL). Heme b is bound by residues histidine 83 and histidine 97. The heme b site is built by histidine 182 and histidine 196. Histidine 201 serves as a coordination point for a ubiquinone. The next 4 membrane-spanning stretches (helical) occupy residues 226–246 (TKDF…VLFF), 288–308 (MGGV…PHIQ), 320–340 (ISQF…WIGG), and 347–367 (FIII…AFLP).

This sequence belongs to the cytochrome b family. As to quaternary structure, the cytochrome bc1 complex contains 11 subunits: 3 respiratory subunits (MT-CYB, CYC1 and UQCRFS1), 2 core proteins (UQCRC1 and UQCRC2) and 6 low-molecular weight proteins (UQCRH/QCR6, UQCRB/QCR7, UQCRQ/QCR8, UQCR10/QCR9, UQCR11/QCR10 and a cleavage product of UQCRFS1). This cytochrome bc1 complex then forms a dimer. The cofactor is heme b.

The protein localises to the mitochondrion inner membrane. In terms of biological role, component of the ubiquinol-cytochrome c reductase complex (complex III or cytochrome b-c1 complex) that is part of the mitochondrial respiratory chain. The b-c1 complex mediates electron transfer from ubiquinol to cytochrome c. Contributes to the generation of a proton gradient across the mitochondrial membrane that is then used for ATP synthesis. This Dipodomys ordii (Ord's kangaroo rat) protein is Cytochrome b (MT-CYB).